Here is a 485-residue protein sequence, read N- to C-terminus: N-succinylglutamate 5-semialdehyde dehydrogenase (485 aa).

An NAD(+)-binding site is contributed by 220 to 225 (GSANTG). Residues Glu-243 and Cys-278 contribute to the active site.

This sequence belongs to the aldehyde dehydrogenase family. AstD subfamily.

It catalyses the reaction N-succinyl-L-glutamate 5-semialdehyde + NAD(+) + H2O = N-succinyl-L-glutamate + NADH + 2 H(+). It participates in amino-acid degradation; L-arginine degradation via AST pathway; L-glutamate and succinate from L-arginine: step 4/5. Its function is as follows. Catalyzes the NAD-dependent reduction of succinylglutamate semialdehyde into succinylglutamate. The chain is N-succinylglutamate 5-semialdehyde dehydrogenase from Vibrio atlanticus (strain LGP32) (Vibrio splendidus (strain Mel32)).